The primary structure comprises 233 residues: Large ribosomal subunit protein uL1 (233 aa).

This sequence belongs to the universal ribosomal protein uL1 family. Part of the 50S ribosomal subunit.

In terms of biological role, binds directly to 23S rRNA. The L1 stalk is quite mobile in the ribosome, and is involved in E site tRNA release. Functionally, protein L1 is also a translational repressor protein, it controls the translation of the L11 operon by binding to its mRNA. The chain is Large ribosomal subunit protein uL1 from Shewanella frigidimarina (strain NCIMB 400).